The chain runs to 106 residues: Cytochrome c3 (106 aa).

Heme c contacts are provided by His-26, His-29, Cys-34, Cys-37, His-38, His-39, Cys-50, Cys-55, His-56, His-75, Cys-82, Cys-85, His-86, Cys-98, Cys-101, and His-102.

In terms of processing, binds 4 heme c groups per subunit.

In terms of biological role, participates in sulfate respiration coupled with phosphorylation by transferring electrons from the enzyme dehydrogenase to ferredoxin. This is Cytochrome c3 from Maridesulfovibrio salexigens (Desulfovibrio salexigens).